The following is a 401-amino-acid chain: 8-amino-7-oxononanoate synthase (401 aa).

Arg24 lines the substrate pocket. 111–112 (GF) is a binding site for pyridoxal 5'-phosphate. His137 is a substrate binding site. Pyridoxal 5'-phosphate-binding residues include Ser183, His211, and Thr240. Lys243 carries the N6-(pyridoxal phosphate)lysine modification. Thr357 is a substrate binding site.

The protein belongs to the class-II pyridoxal-phosphate-dependent aminotransferase family. BioF subfamily. As to quaternary structure, homodimer. Pyridoxal 5'-phosphate serves as cofactor.

The catalysed reaction is 6-carboxyhexanoyl-[ACP] + L-alanine + H(+) = (8S)-8-amino-7-oxononanoate + holo-[ACP] + CO2. It functions in the pathway cofactor biosynthesis; biotin biosynthesis. Functionally, catalyzes the decarboxylative condensation of pimeloyl-[acyl-carrier protein] and L-alanine to produce 8-amino-7-oxononanoate (AON), [acyl-carrier protein], and carbon dioxide. The protein is 8-amino-7-oxononanoate synthase of Xanthomonas axonopodis pv. citri (strain 306).